The chain runs to 76 residues: MSSGALLPKPQMHDPLSKRLWVHIVGAFIVDLGVAAAHKFGAAKPRKKAYADFYRNHDPMKDFDEMRKAGVFRSVK.

The Mitochondrial matrix portion of the chain corresponds to 4-14 (GALLPKPQMHD). Residues 15–55 (PLSKRLWVHIVGAFIVDLGVAAAHKFGAAKPRKKAYADFYR) form a helical membrane-spanning segment. The Mitochondrial intermembrane portion of the chain corresponds to 56–76 (NHDPMKDFDEMRKAGVFRSVK).

The protein belongs to the cytochrome c oxidase subunit 6c family. As to quaternary structure, component of the cytochrome c oxidase (complex IV, CIV), a multisubunit enzyme composed of 14 subunits. The complex is composed of a catalytic core of 3 subunits MT-CO1, MT-CO2 and MT-CO3, encoded in the mitochondrial DNA, and 11 supernumerary subunits COX4I, COX5A, COX5B, COX6A, COX6B, COX6C, COX7A, COX7B, COX7C, COX8 and NDUFA4, which are encoded in the nuclear genome. The complex exists as a monomer or a dimer and forms supercomplexes (SCs) in the inner mitochondrial membrane with NADH-ubiquinone oxidoreductase (complex I, CI) and ubiquinol-cytochrome c oxidoreductase (cytochrome b-c1 complex, complex III, CIII), resulting in different assemblies (supercomplex SCI(1)III(2)IV(1) and megacomplex MCI(2)III(2)IV(2)).

It localises to the mitochondrion inner membrane. Its pathway is energy metabolism; oxidative phosphorylation. In terms of biological role, component of the cytochrome c oxidase, the last enzyme in the mitochondrial electron transport chain which drives oxidative phosphorylation. The respiratory chain contains 3 multisubunit complexes succinate dehydrogenase (complex II, CII), ubiquinol-cytochrome c oxidoreductase (cytochrome b-c1 complex, complex III, CIII) and cytochrome c oxidase (complex IV, CIV), that cooperate to transfer electrons derived from NADH and succinate to molecular oxygen, creating an electrochemical gradient over the inner membrane that drives transmembrane transport and the ATP synthase. Cytochrome c oxidase is the component of the respiratory chain that catalyzes the reduction of oxygen to water. Electrons originating from reduced cytochrome c in the intermembrane space (IMS) are transferred via the dinuclear copper A center (CU(A)) of subunit 2 and heme A of subunit 1 to the active site in subunit 1, a binuclear center (BNC) formed by heme A3 and copper B (CU(B)). The BNC reduces molecular oxygen to 2 water molecules using 4 electrons from cytochrome c in the IMS and 4 protons from the mitochondrial matrix. This Rattus norvegicus (Rat) protein is Cytochrome c oxidase subunit 6C-1 (Cox6c1).